The primary structure comprises 105 residues: Urease subunit beta (105 aa).

It belongs to the urease beta subunit family. As to quaternary structure, heterotrimer of UreA (gamma), UreB (beta) and UreC (alpha) subunits. Three heterotrimers associate to form the active enzyme.

It is found in the cytoplasm. It carries out the reaction urea + 2 H2O + H(+) = hydrogencarbonate + 2 NH4(+). It functions in the pathway nitrogen metabolism; urea degradation; CO(2) and NH(3) from urea (urease route): step 1/1. The polypeptide is Urease subunit beta (Pseudomonas putida (strain W619)).